The following is an 835-amino-acid chain: Probable alpha-glucuronidase A (835 aa).

Residues Met1–Ala18 form the signal peptide. N-linked (GlcNAc...) asparagine glycans are attached at residues Asn49, Asn101, Asn148, Asn221, Asn278, Asn309, Asn342, Asn460, Asn522, Asn571, Asn677, and Asn727.

It belongs to the glycosyl hydrolase 67 family.

The protein resides in the secreted. It catalyses the reaction an alpha-D-glucuronoside + H2O = D-glucuronate + an alcohol. Its function is as follows. Alpha-glucuronidase involved in the hydrolysis of xylan, a major structural heterogeneous polysaccharide found in plant biomass representing the second most abundant polysaccharide in the biosphere, after cellulose. Releases 4-O-methylglucuronic acid from xylan. The sequence is that of Probable alpha-glucuronidase A (aguA) from Aspergillus oryzae (strain ATCC 42149 / RIB 40) (Yellow koji mold).